Here is a 192-residue protein sequence, read N- to C-terminus: Casparian strip membrane protein 4 (192 aa).

The Cytoplasmic portion of the chain corresponds to 1-29; that stretch reads MTKDVVIEHGESSKAPLVPAPVAAGVGRA. The helical transmembrane segment at 30–50 threads the bilayer; the sequence is VSIADVFLRFLSIVATIASAI. The Extracellular portion of the chain corresponds to 51 to 79; sequence SMGTTNETLPFFTQFIQFEAKYSDLPSFT. Asparagine 56 carries N-linked (GlcNAc...) asparagine glycosylation. The chain crosses the membrane as a helical span at residues 80 to 100; the sequence is FFVAANAVVCTYLVLSIPLSI. Residues 101–112 lie on the Cytoplasmic side of the membrane; sequence VHIIRPRARYSR. A helical membrane pass occupies residues 113-133; it reads LILVFFDAVMLALLTAGASAA. Topologically, residues 134–166 are extracellular; that stretch reads AAIVYLAHKGNVRANWFAICQQFDSFCERISGS. The chain crosses the membrane as a helical span at residues 167-187; it reads LIGSFAAMVLLIVLIFLSAFA. Topologically, residues 188 to 192 are cytoplasmic; it reads LARRH.

This sequence belongs to the Casparian strip membrane proteins (CASP) family. As to quaternary structure, homodimer and heterodimers.

The protein localises to the cell membrane. Regulates membrane-cell wall junctions and localized cell wall deposition. Required for establishment of the Casparian strip membrane domain (CSD) and the subsequent formation of Casparian strips, a cell wall modification of the root endodermis that determines an apoplastic barrier between the intraorganismal apoplasm and the extraorganismal apoplasm and prevents lateral diffusion. This chain is Casparian strip membrane protein 4, found in Sorghum bicolor (Sorghum).